The primary structure comprises 227 residues: H-2 class II histocompatibility antigen, A-U alpha chain (227 aa).

The interval 1 to 82 (DHVGSYGIVV…KRSNSTPATN (82 aa)) is alpha-1. Residues 1 to 189 (DHVGSYGIVV…IPAPMSELTE (189 aa)) are Extracellular-facing. The alpha-2 stretch occupies residues 83–176 (EAPQATVFPK…GLEEPVLKHW (94 aa)). In terms of domain architecture, Ig-like C1-type spans 85-177 (PQATVFPKSP…LEEPVLKHWE (93 aa)). Cys-105 and Cys-161 are oxidised to a cystine. N-linked (GlcNAc...) asparagine glycosylation is present at Asn-116. Positions 177–189 (EPEIPAPMSELTE) are connecting peptide. The helical transmembrane segment at 190-215 (TVVCALGLSVGLVGIVVGTIFIIQGL) threads the bilayer. The Cytoplasmic portion of the chain corresponds to 216–227 (RSGGTSRHPGPL).

This sequence belongs to the MHC class II family.

The protein resides in the membrane. The sequence is that of H-2 class II histocompatibility antigen, A-U alpha chain (H2-Aa) from Mus musculus (Mouse).